A 332-amino-acid polypeptide reads, in one-letter code: Cell growth regulator with RING finger domain protein 1 (332 aa).

An RING-type zinc finger spans residues 274-309 (CVVCQNGGVNWVLLPCRHACLCDSCVCYFKQCPMCR).

In terms of tissue distribution, highly expressed in testis, lower levels of expression is seen in skeletal muscle, liver, lung and brain.

It is found in the nucleus. It localises to the endoplasmic reticulum. Its function is as follows. Able to inhibit growth in several cell lines. In Rattus norvegicus (Rat), this protein is Cell growth regulator with RING finger domain protein 1 (Cgrrf1).